Consider the following 295-residue polypeptide: MRPQLSDYQHVSSGKVRDIYEVDDNTLLMVVTDRISAYDFALEPAIPDKGRVLTATTMFFFDAIDFPNHLAGPIDDARIPEEVLGRAIIVKKLNMLPFECVARGYLTGSGLKEYNANGTVCGIELPEGLVEASRLPEPIFTPATKAEQGDHDENVSFERVVQDLGQERAEQLRDETLRIYSAAAKIAEEKGIILADTKFEFGLDSEGNLVLGDEVLTPDSSRYWPADTYAEGIVQPSFDKQYVRNWLTSEESGWDVESETQPPVLPDDIVAATRLRYIEAYERLSGKRFIDFIGG.

Belongs to the SAICAR synthetase family.

The enzyme catalyses 5-amino-1-(5-phospho-D-ribosyl)imidazole-4-carboxylate + L-aspartate + ATP = (2S)-2-[5-amino-1-(5-phospho-beta-D-ribosyl)imidazole-4-carboxamido]succinate + ADP + phosphate + 2 H(+). The protein operates within purine metabolism; IMP biosynthesis via de novo pathway; 5-amino-1-(5-phospho-D-ribosyl)imidazole-4-carboxamide from 5-amino-1-(5-phospho-D-ribosyl)imidazole-4-carboxylate: step 1/2. In Corynebacterium ammoniagenes (Brevibacterium ammoniagenes), this protein is Phosphoribosylaminoimidazole-succinocarboxamide synthase.